We begin with the raw amino-acid sequence, 629 residues long: Neuronal acetylcholine receptor subunit alpha-4 (629 aa).

Positions 1–30 (MEIGGSGAPPPLLLLPLLLLLGTGLLPASS) are cleaved as a signal peptide. Topologically, residues 32–249 (IETRAHAEER…IIRRLPLFYT (218 aa)) are extracellular. N59 carries an N-linked (GlcNAc...) asparagine glycan. Positions 78 and 80 each coordinate Ca(2+). N-linked (GlcNAc...) asparagine glycans are attached at residues N109 and N176. 2 disulfide bridges follow: C163/C177 and C227/C228. Residues 250–270 (INLIIPCLLISCLTVLVFYLP) traverse the membrane as a helical segment. C273 is lipidated: S-palmitoyl cysteine. 2 helical membrane passes run 279 to 299 (LCIS…EIIP) and 312 to 332 (LLFT…VLNV). Over 333 to 603 (HHRSPRTHTM…KYVAMVIDRI (271 aa)) the chain is Cytoplasmic. 2 disordered regions span residues 420–459 (ETQP…NSSG) and 503–529 (SLTE…SDQT). S427 is subject to Phosphoserine. Residues 431 to 442 (KVPDLKTSEVEK) show a composition bias toward basic and acidic residues. Low complexity predominate over residues 449–459 (PGSCHPPNSSG). A compositionally biased stretch (polar residues) spans 504–529 (LTESKPTGSPASLKTRPSQLPVSDQT). A phosphoserine mark is found at S540 and S543. The chain crosses the membrane as a helical span at residues 604-624 (FLWMFIIVCLLGTVGLFLPPW).

Belongs to the ligand-gated ion channel (TC 1.A.9) family. Acetylcholine receptor (TC 1.A.9.1) subfamily. Alpha-4/CHRNA4 sub-subfamily. Neuronal AChR is composed of two different types of subunits: alpha and beta. CHRNA4 forms heteropentameric neuronal acetylcholine receptors with CHRNB2 and CHRNB4, as well as CHRNA5 and CHRNB3 as accesory subunits. Found in two major stoichiometric forms, LS (low agonist sensitivity): (CHRNA4)3:(CHRNB2)2 and HS (high agonist sensitivity): (CHRNA4)2:(CHRNB2)3, the two stoichiometric forms differ in their unitary conductance, calcium permeability, ACh sensitivity and potentiation by divalent cation. Cells produce predominantly an (CHRNA4)3:(CHRNB2)2 nAChR. The (CHRNA4)2:(CHRNB2)3 expression is selectively up-regulated by nicotine and has lower single channel conductance and calcium permeability. In the striatum, also forms CHRNA4:CHRNA6:CHRNB2 complexes. Also found in the stoichiometric form: (CHRNA4:CHRNB2)2:CHRNB3. Interacts with RIC3; which is required for proper folding and assembly. Interacts with LYPD6.

The protein resides in the synaptic cell membrane. Its subcellular location is the cell membrane. The enzyme catalyses K(+)(in) = K(+)(out). The catalysed reaction is Na(+)(in) = Na(+)(out). It carries out the reaction Ca(2+)(in) = Ca(2+)(out). With respect to regulation, activated by a myriad of ligands such as acetylcholine, cytisine, nicotine, choline and epibatidine. Channel potentiation by calcium is stoichiometry-selective, CHRNA4:CHRNB2 nACh receptor is achieved by calcium association with topographically distinct sites framed by anionic residues within the CHRNA4 subunit and between the CHRNA4 and CHRNB2 subunits. nAChR activity is inhibited by the antagonist alpha-conotoxins BuIA, PnIA, GID and MII, small disulfide-constrained peptides from cone snails. Its function is as follows. Component of neuronal acetylcholine receptors (nAChRs) that function as pentameric, ligand-gated cation channels with high calcium permeability among other activities. nAChRs are excitatory neurotrasnmitter receptors formed by a collection of nAChR subunits known to mediate synaptic transmission in the nervous system and the neuromuscular junction. Each nAchR subunit confers differential attributes to channel properties, including activation, deactivation and desensitization kinetics, pH sensitivity, cation permeability, and binding to allosteric modulators. CHRNA4 forms heteropentameric neuronal acetylcholine receptors with CHRNB2 and CHRNB4, as well as CHRNA5 and CHRNB3 as accesory subunits. Is the most abundant nAChR subtype expressed in the central nervous system. Found in two major stoichiometric forms,(CHRNA4)3:(CHRNB2)2 and (CHRNA4)2:(CHRNB2)3, the two stoichiometric forms differ in their unitary conductance, calcium permeability, ACh sensitivity and potentiation by divalent cation. Involved in the modulation of calcium-dependent signaling pathways, influences the release of neurotransmitters, including dopamine, glutamate and GABA. In Mus musculus (Mouse), this protein is Neuronal acetylcholine receptor subunit alpha-4 (Chrna4).